A 309-amino-acid chain; its full sequence is MTAAHVAAPEPGQYELSHLRLLEAEAIHIIREVAAEFERPVLLFSGGKDSIVMLHLAIKAFAPARLPFPVMHVDTGHNFDEVIATRDRLVAENGVRLVVASVQEDIDAGRVVDNGPSRNPLQTVTLLRAIRENRFDAAFGGARRDEEKARAKERVFSFRDEFGQWDPKAQRPELWNIYNGRHRKGEHIRVFPLSNWTEYDIWAYIGAEGITLPGIYYAHTRPVFQRDGMLLAVHPYMQPRDDEEVFETSVRFRTVGDVTCTGCVESTASTVEDIIAETAVSRLTERGATRADDRISEAGMEDRKREGYF.

It belongs to the PAPS reductase family. CysD subfamily. Heterodimer composed of CysD, the smaller subunit, and CysN.

It carries out the reaction sulfate + ATP + H(+) = adenosine 5'-phosphosulfate + diphosphate. The protein operates within sulfur metabolism; hydrogen sulfide biosynthesis; sulfite from sulfate: step 1/3. Functionally, with CysN forms the ATP sulfurylase (ATPS) that catalyzes the adenylation of sulfate producing adenosine 5'-phosphosulfate (APS) and diphosphate, the first enzymatic step in sulfur assimilation pathway. APS synthesis involves the formation of a high-energy phosphoric-sulfuric acid anhydride bond driven by GTP hydrolysis by CysN coupled to ATP hydrolysis by CysD. The chain is Sulfate adenylyltransferase subunit 2 from Mycobacterium sp. (strain JLS).